The chain runs to 101 residues: Small ribosomal subunit protein uS14 (101 aa).

The protein belongs to the universal ribosomal protein uS14 family. Part of the 30S ribosomal subunit. Contacts proteins S3 and S10.

Binds 16S rRNA, required for the assembly of 30S particles and may also be responsible for determining the conformation of the 16S rRNA at the A site. This is Small ribosomal subunit protein uS14 from Shewanella oneidensis (strain ATCC 700550 / JCM 31522 / CIP 106686 / LMG 19005 / NCIMB 14063 / MR-1).